We begin with the raw amino-acid sequence, 96 residues long: Protein ORF5 (96 aa).

The protein belongs to the microviridae C protein family.

In terms of biological role, plays a central role in the packaging of viral DNA into phage procapsid, which occurs in the late stage of infection. Can interact with the replicative complex after the completion of one round of DNA synthesis. When protein ORF5 is bound to the replicative form, the complex becomes accessible to procapsid and serves as a DNA packaging apparatus. The protein is Protein ORF5 of Chlamydia phage 1 (Bacteriophage Chp1).